The chain runs to 197 residues: MSSVSLVASAELPTPWGVFTMTGFKEEATGKDHVALSMGDITTDAPVLARIHSECLTGDALFSLRCDCGFQLQAALQRIAKEERGVLLYVRQEGRGIGLLNKIHAYHLQDQGADTVEANEALGFAPDLRDYTICADMLKLLDVKSLRLMTNNPRKIKAMEKYGIPVAERVPLEEGKNAYNEFYLATKAGKLGHMLHD.

GTP is bound at residue 50–54; the sequence is RIHSE. Residues Cys-55, Cys-66, and Cys-68 each coordinate Zn(2+). Residues Gln-71, 93–95, and Thr-115 each bind GTP; that span reads EGR. Asp-127 acts as the Proton acceptor in catalysis. Arg-129 functions as the Nucleophile in the catalytic mechanism. GTP contacts are provided by Thr-150 and Lys-155.

The protein belongs to the GTP cyclohydrolase II family. Zn(2+) is required as a cofactor.

The catalysed reaction is GTP + 4 H2O = 2,5-diamino-6-hydroxy-4-(5-phosphoribosylamino)-pyrimidine + formate + 2 phosphate + 3 H(+). Its pathway is cofactor biosynthesis; riboflavin biosynthesis; 5-amino-6-(D-ribitylamino)uracil from GTP: step 1/4. Its function is as follows. Catalyzes the conversion of GTP to 2,5-diamino-6-ribosylamino-4(3H)-pyrimidinone 5'-phosphate (DARP), formate and pyrophosphate. The chain is GTP cyclohydrolase-2 from Tolumonas auensis (strain DSM 9187 / NBRC 110442 / TA 4).